The chain runs to 466 residues: Tryptophan synthase beta chain 2, chloroplastic (466 aa).

Lys-161 is subject to N6-(pyridoxal phosphate)lysine.

Belongs to the TrpB family. As to quaternary structure, tetramer of two alpha and two beta chains. Requires pyridoxal 5'-phosphate as cofactor.

The protein localises to the plastid. The protein resides in the chloroplast. The catalysed reaction is (1S,2R)-1-C-(indol-3-yl)glycerol 3-phosphate + L-serine = D-glyceraldehyde 3-phosphate + L-tryptophan + H2O. Its pathway is amino-acid biosynthesis; L-tryptophan biosynthesis; L-tryptophan from chorismate: step 5/5. Its function is as follows. The beta subunit is responsible for the synthesis of L-tryptophan from indole and L-serine. The sequence is that of Tryptophan synthase beta chain 2, chloroplastic (TSB) from Camptotheca acuminata (Happy tree).